Consider the following 432-residue polypeptide: Leucine-rich repeat-containing protein ODA7 (432 aa).

LRR repeat units follow at residues 47–68 (NLKA…PPLA), 69–90 (DLKC…EAVP), 91–112 (GLDT…ACCP), 113–134 (ALRT…AHLA), and 138–159 (ALQT…DILK). The 39-residue stretch at 173–211 (PVVSNIKNYRKVLVTSIPSLTYLDDRPVFDNERKIAQAW) folds into the LRRCT domain. A coiled-coil region spans residues 212-243 (LEGGLEGERAMRNQLKEEEEERSRKNHEFMMQ). 2 disordered regions span residues 297–332 (RPGE…AAAE) and 368–432 (EELD…NDLD). Low complexity-rich tracts occupy residues 323–332 (GAWGSGAAAE) and 407–425 (VAAA…ISAA).

The protein belongs to the DNAAF1 family. Interacts with both outer row and I1 inner row dyneins.

Its subcellular location is the cytoplasm. It localises to the cytoskeleton. It is found in the cilium axoneme. Functionally, cilium-specific protein required for cilia structures. Axonemal dynein-associated protein that participates in a structural link between inner and outer row dyneins. The chain is Leucine-rich repeat-containing protein ODA7 (ODA7) from Chlamydomonas reinhardtii (Chlamydomonas smithii).